The sequence spans 380 residues: tRNA (guanine(26)-N(2))-dimethyltransferase (380 aa).

Residues 2–374 enclose the Trm1 methyltransferase domain; the sequence is ITVNEGSVTI…AGIGEIEEVL (373 aa). S-adenosyl-L-methionine contacts are provided by Arg35, Arg65, Asp83, Asp109, and Ala110. The Zn(2+) site is built by Cys242, Cys245, Cys261, and Cys264.

The protein belongs to the class I-like SAM-binding methyltransferase superfamily. Trm1 family.

The enzyme catalyses guanosine(26) in tRNA + 2 S-adenosyl-L-methionine = N(2)-dimethylguanosine(26) in tRNA + 2 S-adenosyl-L-homocysteine + 2 H(+). Dimethylates a single guanine residue at position 26 of a number of tRNAs using S-adenosyl-L-methionine as donor of the methyl groups. The chain is tRNA (guanine(26)-N(2))-dimethyltransferase from Methanothermobacter thermautotrophicus (strain ATCC 29096 / DSM 1053 / JCM 10044 / NBRC 100330 / Delta H) (Methanobacterium thermoautotrophicum).